We begin with the raw amino-acid sequence, 246 residues long: UPF0736 protein GWCH70_0753 (246 aa).

It belongs to the UPF0736 family.

This chain is UPF0736 protein GWCH70_0753, found in Geobacillus sp. (strain WCH70).